We begin with the raw amino-acid sequence, 567 residues long: MDDKDIDKELRQKLNFSYCEETEIEGQKKVEESREASSQTPEKGEVQDSEAKGTPPWTPLSNVHELDTSSEKDKESPDQILRTPVSHPLKCPETPAQPDSRSKLLPSDSPSTPKTMLSRLVISPTGKLPSRGPKHLKLTPAPLKDEMTSLALVNINPFTPESYKKLFLQSGGKRKIRGDLEEAGPEEGKGGLPAKRCVLRETNMASRYEKEFLEVEKIGVGEFGTVYKCIKRLDGCVYAIKRSMKTFTELSNENSALHEVYAHAVLGHHPHVVRYYSSWAEDDHMIIQNEYCNGGSLQAAISENTKSGNHFEEPKLKDILLQISLGLNYIHNSSMVHLDIKPSNIFICHKMQSESSGVIEEVENEADWFLSANVMYKIGDLGHATSINKPKVEEGDSRFLANEILQEDYRHLPKADIFALGLTIAVAAGAESLPTNGAAWHHIRKGNFPDVPQELSESFSSLLKNMIQPDAEQRPSAAALARNTVLRPSLGKTEELQQQLNLEKFKTATLERELREAQQAQSPQGYTHHGDTGVSGTHTGSRSTKRLVGGKSARSSSFTSGEREPLH.

Basic and acidic residues-rich tracts occupy residues 1 to 12, 25 to 35, 42 to 51, and 64 to 77; these read MDDKDIDKELRQ, EGQKKVEESRE, EKGEVQDSEA, and HELD…KESP. The disordered stretch occupies residues 1 to 117; the sequence is MDDKDIDKEL…DSPSTPKTML (117 aa). Ser-76 bears the Phosphoserine mark. Residues 173–175 carry the Nuclear localization signal motif; it reads KRK. One can recognise a Protein kinase domain in the interval 212-486; the sequence is FLEVEKIGVG…AAALARNTVL (275 aa). Residues 218–226 and Lys-241 each bind ATP; that span reads IGVGEFGTV. Residues 315–329 carry the Nuclear export signal motif; the sequence is KLKDILLQISLGLNY. The active-site Proton acceptor is Asp-339. Asn-344 and Asp-380 together coordinate Mg(2+). The stretch at 494-519 forms a coiled coil; it reads EELQQQLNLEKFKTATLERELREAQQ. The interval 514–567 is disordered; it reads LREAQQAQSPQGYTHHGDTGVSGTHTGSRSTKRLVGGKSARSSSFTSGEREPLH.

Belongs to the protein kinase superfamily. Ser/Thr protein kinase family. WEE1 subfamily. Phosphorylated on serine residues. Phosphorylation leads to increase its activity. In terms of tissue distribution, expressed in oocytes (at protein level). May also be expressed in testis.

The protein localises to the nucleus. The catalysed reaction is L-tyrosyl-[protein] + ATP = O-phospho-L-tyrosyl-[protein] + ADP + H(+). Its function is as follows. Oocyte-specific protein tyrosine kinase that phosphorylates and inhibits CDK1/CDC2 and acts as a key regulator of meiosis during both prophase I and metaphase II. Required to maintain meiotic arrest in oocytes during the germinal vesicle (GV) stage, a long period of quiescence at dictyate prophase I, by phosphorylating CDK1 at 'Tyr-15', leading to inhibit CDK1 activity and prevent meiotic reentry. Also required for metaphase II exit during egg activation by phosphorylating CDK1 at 'Tyr-15', to ensure exit from meiosis in oocytes and promote pronuclear formation. This Homo sapiens (Human) protein is Wee1-like protein kinase 2 (WEE2).